The primary structure comprises 128 residues: Large ribosomal subunit protein bL19 (128 aa).

It belongs to the bacterial ribosomal protein bL19 family.

Its function is as follows. This protein is located at the 30S-50S ribosomal subunit interface and may play a role in the structure and function of the aminoacyl-tRNA binding site. The polypeptide is Large ribosomal subunit protein bL19 (Mesoplasma florum (strain ATCC 33453 / NBRC 100688 / NCTC 11704 / L1) (Acholeplasma florum)).